Reading from the N-terminus, the 105-residue chain is MSLKSWHPQSKTKRVGASEGNPQWGSGSMEAPLLSSFLPPLASEAELTGNTWFLHRCSCILNLEESMDSDWGAWWGVSLPRRAPFLIYGSDGPWCTQAGFPGWGH.

The tract at residues methionine 1–glycine 27 is disordered.

This is an uncharacterized protein from Homo sapiens (Human).